The sequence spans 829 residues: MKLSRRDFMKANAVAAAAAVAGVSAPTLAANLITSTDKTAIKWDKAPCRFCGTGCSVLVGSQDGRVVATQGDPDAPVNRGLNCIKGYFLSKIMYGEDRLTQPMLRMTNGKFDKNGDFAPVSWDQAFDIMAEKFKATLKEKGPTAVGMFGSGQWTVWEGYAAAKLMKAGFRTNNLDPNARHCMASAVVGFMRTFGMDEPMGCYDDIEQADAFVLWGSNMAEMHPILWSRMSDRRLSNPDVQVHVLSTFEHRSFELADNGMVFTPQTDLAILNYVANYIIQNDKVNWEFVNKHTQFRKGTTDIGYGLRPTHPTEARAKNPGNGDATPMSFDDFAKFVADYDLESVSKLSGVSKEKLEKLAQLYADPSKKVVSYWTMGFNQHTRGVWANNLCYNIHLLTGKISTPGSGPFSLTGQPSACGTAREVGTFAHRLPADMVVTDPKHRAIAEKIWKLPEGTIPEQVGYHAVLQNRMLKDGKLNAYWVMCNNNMQAGPNMNEEALPGYRNPANFIVVSDPYPTVTAQAADLILPTAMWVEKEGAYGNAERRTQFWHQQVKPPEGAKSDLWQLMEFAKRFKVEEVWPAELIAKQPELKGKTLFDVLYANGQVDQFPKEQSKGEFNDESESFGFYVQKGLFEEYATFGRGHGHDLAPFDQYHEARGLRWPVVDGKETLWRYREGFDPYVKAGEGVRFYGKPDGRAVIFALPYEPAAEAPDKEYDMWLSTGRVLEHWHTGTMTRRVPELYRAFPDAVLFMHPEDAKARGVRRGEEVIVSSRRGEVKTRVETRGRNRPPKGLVFMPFFDASQLVNKLTLDATDPLSKETDYKKCAVKVVKA.

The segment at residues 1–30 (MKLSRRDFMKANAVAAAAAVAGVSAPTLAA) is a signal peptide (tat-type signal). The 57-residue stretch at 41 to 97 (IKWDKAPCRFCGTGCSVLVGSQDGRVVATQGDPDAPVNRGLNCIKGYFLSKIMYGED) folds into the 4Fe-4S Mo/W bis-MGD-type domain. 4 residues coordinate [4Fe-4S] cluster: Cys48, Cys51, Cys55, and Cys83. Mo-bis(molybdopterin guanine dinucleotide) is bound by residues Lys85, Gln152, Asn177, Cys181, 214–221 (WGSNMAEM), 245–249 (STFEH), 264–266 (QTD), Met374, Gln378, Asn484, 510–511 (SD), Lys533, Asp560, and 719–728 (TGRVLEHWHT). Phe795 is a substrate binding site. Mo-bis(molybdopterin guanine dinucleotide) is bound by residues Asn803 and Lys820.

It belongs to the prokaryotic molybdopterin-containing oxidoreductase family. NasA/NapA/NarB subfamily. Component of the periplasmic nitrate reductase NapAB complex composed of NapA and NapB. The cofactor is [4Fe-4S] cluster. Requires Mo-bis(molybdopterin guanine dinucleotide) as cofactor. Predicted to be exported by the Tat system. The position of the signal peptide cleavage has not been experimentally proven.

Its subcellular location is the periplasm. The catalysed reaction is 2 Fe(II)-[cytochrome] + nitrate + 2 H(+) = 2 Fe(III)-[cytochrome] + nitrite + H2O. Functionally, catalytic subunit of the periplasmic nitrate reductase complex NapAB. Receives electrons from NapB and catalyzes the reduction of nitrate to nitrite. This is Periplasmic nitrate reductase from Aeromonas salmonicida (strain A449).